We begin with the raw amino-acid sequence, 963 residues long: Protein suppressor of white apricot (963 aa).

The stretch at 234–276 (IIEKTARFIATQGAQMEILIKAKQANNTQFDFLTQGGHLQPYY) is one SURP motif 1 repeat. Disordered regions lie at residues 290-322 (PAPQTPLDQQNTDKEAPSADDHSEEVAGGRRNP) and 360-430 (EDES…EPPQ). The segment covering 300-317 (NTDKEAPSADDHSEEVAG) has biased composition (basic and acidic residues). Over residues 364-375 (SNPGNSQHSGGT) the composition is skewed to polar residues. Basic and acidic residues predominate over residues 407-418 (THEEESSNREQQ). 4 positions are modified to phosphoserine: Ser-438, Ser-447, Ser-448, and Ser-450. A disordered region spans residues 445 to 470 (NYSSESEEEEDQVQPEKEEEKKPEPV). A compositionally biased stretch (basic and acidic residues) spans 458 to 468 (QPEKEEEKKPE). Residues 483-523 (IIDKTATYVIKNGRQFEETLRTKSVDRFSFLLPANEYYPYY) form an SURP motif 2 repeat. Disordered stretches follow at residues 593 to 613 (PQEASDEETSSNAAGVEHVRP), 634 to 662 (TAGQKGNITASPSCSSPQKEQRQAEERVK), and 716 to 963 (PPES…SSSP). A compositionally biased stretch (polar residues) spans 637 to 651 (QKGNITASPSCSSPQ). Phosphoserine is present on Ser-649. The segment covering 652–662 (KEQRQAEERVK) has biased composition (basic and acidic residues). A compositionally biased stretch (low complexity) spans 718 to 727 (ESAAGAATAD). Residues 768–778 (DEEDDDEEDGG) are compositionally biased toward acidic residues. Over residues 787-796 (NDDSTNTFTS) the composition is skewed to polar residues. The segment covering 799–809 (VLPPTAAPPPA) has biased composition (pro residues). Positions 820–830 (QLVATTSTRSS) are enriched in low complexity. Residues 831-847 (SSRHLKTHRRSRSRSKN) are compositionally biased toward basic residues. Low complexity predominate over residues 848–858 (VRSSDSSPSSR). Basic residues-rich tracts occupy residues 861–870 (SRRRRQKSSR) and 882–913 (KSQHSSTQRKKTPKKRRRSKSRSRSKSIRRSR). A phosphoserine mark is found at Ser-912, Ser-914, and Ser-916. A compositionally biased stretch (basic and acidic residues) spans 934-944 (AEQRRQQDRRR). The segment covering 945-963 (TPTKKSHKRHKRRRRSSSP) has biased composition (basic residues).

The protein localises to the nucleus speckle. Regulator of pre-mRNA splicing (and, possibly, of other RNA processing events). Regulates its own expression at the level of RNA processing. The protein is Protein suppressor of white apricot (su(w[a])) of Drosophila melanogaster (Fruit fly).